A 425-amino-acid chain; its full sequence is Elongation factor 1-alpha (425 aa).

Positions 5–221 constitute a tr-type G domain; it reads KPHMNLAVIG…NALSEPEKPT (217 aa). Residues 14–21 are G1; that stretch reads GHIDHGKS. 14–21 is a GTP binding site; sequence GHIDHGKS. Residue S21 participates in Mg(2+) binding. A G2 region spans residues 70 to 74; the sequence is GITID. Residues 91-94 form a G3 region; the sequence is DCPG. GTP contacts are provided by residues 91–95 and 146–149; these read DCPGH and NKMD. The G4 stretch occupies residues 146–149; it reads NKMD. The G5 stretch occupies residues 185–187; sequence SAF.

It belongs to the TRAFAC class translation factor GTPase superfamily. Classic translation factor GTPase family. EF-Tu/EF-1A subfamily.

Its subcellular location is the cytoplasm. It catalyses the reaction GTP + H2O = GDP + phosphate + H(+). In terms of biological role, GTP hydrolase that promotes the GTP-dependent binding of aminoacyl-tRNA to the A-site of ribosomes during protein biosynthesis. In Methanoculleus marisnigri (strain ATCC 35101 / DSM 1498 / JR1), this protein is Elongation factor 1-alpha.